Here is a 131-residue protein sequence, read N- to C-terminus: Aspartate 1-decarboxylase (131 aa).

The active-site Schiff-base intermediate with substrate; via pyruvic acid is the Ser25. Ser25 carries the post-translational modification Pyruvic acid (Ser). A substrate-binding site is contributed by Thr57. Residue Tyr58 is the Proton donor of the active site. Position 73 to 75 (73 to 75 (GAA)) interacts with substrate.

It belongs to the PanD family. Heterooctamer of four alpha and four beta subunits. Pyruvate is required as a cofactor. Post-translationally, is synthesized initially as an inactive proenzyme, which is activated by self-cleavage at a specific serine bond to produce a beta-subunit with a hydroxyl group at its C-terminus and an alpha-subunit with a pyruvoyl group at its N-terminus.

The protein localises to the cytoplasm. It carries out the reaction L-aspartate + H(+) = beta-alanine + CO2. It participates in cofactor biosynthesis; (R)-pantothenate biosynthesis; beta-alanine from L-aspartate: step 1/1. In terms of biological role, catalyzes the pyruvoyl-dependent decarboxylation of aspartate to produce beta-alanine. The polypeptide is Aspartate 1-decarboxylase (Anaeromyxobacter sp. (strain K)).